The primary structure comprises 249 residues: Cyclic AMP-responsive element-binding protein (249 aa).

The region spanning 35-94 (IQPNQHQLQHQLQTMHDGGIDGKRREILARRPSYRRILDDLAGDGPVKMENYDDTGSSGE) is the KID domain. Positions 73-106 (DDLAGDGPVKMENYDDTGSSGESSPNGNNEEDIN) are disordered. Over residues 90-100 (GSSGESSPNGN) the composition is skewed to low complexity. The bZIP domain occupies 191–249 (TRKRELRLYKNREAARECRRKKKEYVKCLENRVAVLENQNKALIEELKSLKDLYCSKGD). The tract at residues 192–217 (RKRELRLYKNREAARECRRKKKEYVK) is basic motif. A leucine-zipper region spans residues 219-240 (LENRVAVLENQNKALIEELKSL).

Belongs to the bZIP family. Binds DNA as a dimer.

It localises to the nucleus. Functionally, this protein binds the cAMP response element (CRE), sequence present in many viral and cellular promoters. Could regulate the transcriptional activity of genes involved in regeneration processes. The protein is Cyclic AMP-responsive element-binding protein (CREB) of Hydra viridissima (Green hydra).